Consider the following 273-residue polypeptide: Type II iodothyronine deiodinase (273 aa).

The Lumenal portion of the chain corresponds to 1–9 (MGILSVDLL). Residues 10 to 34 (ITLQILPVFFSNCLFLALYDSVILL) form a helical; Signal-anchor for type III membrane protein membrane-spanning segment. The Cytoplasmic portion of the chain corresponds to 35–273 (KHVVLLLSRS…KRUKKTRLAG (239 aa)). The active site involves U133. Residues U133 and U266 are each a non-standard amino acid (selenocysteine).

The protein belongs to the iodothyronine deiodinase family. In terms of assembly, predominantly monomer. Can form homodimers but homodimerization is not essential for enzyme activity. Interacts with USP20 and USP33. Interacts with MARCHF6. Post-translationally, ubiquitinated by MARCHF6, leading to its degradation by the proteasome. Deubiquitinated by USP20 and USP33. As to expression, isoform 1 is expressed in the lung, trachea, kidney, heart, skeletal muscle, placenta, fetal brain and several regions of the adult brain. Isoform 2 is expressed in the brain, heart, kidney and trachea.

It localises to the endoplasmic reticulum membrane. It carries out the reaction 3,3',5-triiodo-L-thyronine + iodide + A + H(+) = L-thyroxine + AH2. The catalysed reaction is 3,3'-diiodo-L-thyronine + iodide + A + H(+) = 3,3',5'-triiodo-L-thyronine + AH2. The enzyme catalyses 3'-iodo-L-thyronine + iodide + A + H(+) = 3',5'-diiodo-L-thyronine + AH2. It catalyses the reaction 3,3'-diiodothyronamine + iodide + A + H(+) = 3,3',5'-triiodothyronamine + AH2. It carries out the reaction 3'-iodothyronamine + iodide + A + H(+) = 3',5'-diiodothyronamine + AH2. Plays a crucial role in the metabolism of thyroid hormones (TH) and has specific roles in TH activation and inactivation by deiodination. Catalyzes the deiodination of L-thyroxine (T4) to 3,5,3'-triiodothyronine (T3), 3,3',5'-triiodothyronine (rT3) to 3,3'-diiodothyronine (3,3'-T2) and 3',5'-diiodothyronine (3',5'-T2) to 3'-monoiodothyronine (3'-T1) via outer-ring deiodination (ORD). Catalyzes the phenolic ring deiodinations of 3,3',5'-triiodothyronamine and 3',5'- diiodothyronamine. In Homo sapiens (Human), this protein is Type II iodothyronine deiodinase (DIO2).